The sequence spans 368 residues: Putative glutamate--cysteine ligase 2 (368 aa).

Belongs to the glutamate--cysteine ligase type 2 family. YbdK subfamily.

The enzyme catalyses L-cysteine + L-glutamate + ATP = gamma-L-glutamyl-L-cysteine + ADP + phosphate + H(+). Functionally, ATP-dependent carboxylate-amine ligase which exhibits weak glutamate--cysteine ligase activity. This is Putative glutamate--cysteine ligase 2 from Pseudomonas putida (strain ATCC 47054 / DSM 6125 / CFBP 8728 / NCIMB 11950 / KT2440).